A 213-amino-acid polypeptide reads, in one-letter code: Octanoyltransferase (213 aa).

The BPL/LPL catalytic domain occupies 35-213; it reads DERGDAVLLL…ERHLPTLIEP (179 aa). Substrate is bound by residues 73–80, 145–147, and 158–160; these read RGGKITWH, AIG, and GFS. Cysteine 176 serves as the catalytic Acyl-thioester intermediate.

This sequence belongs to the LipB family.

Its subcellular location is the cytoplasm. The enzyme catalyses octanoyl-[ACP] + L-lysyl-[protein] = N(6)-octanoyl-L-lysyl-[protein] + holo-[ACP] + H(+). The protein operates within protein modification; protein lipoylation via endogenous pathway; protein N(6)-(lipoyl)lysine from octanoyl-[acyl-carrier-protein]: step 1/2. In terms of biological role, catalyzes the transfer of endogenously produced octanoic acid from octanoyl-acyl-carrier-protein onto the lipoyl domains of lipoate-dependent enzymes. Lipoyl-ACP can also act as a substrate although octanoyl-ACP is likely to be the physiological substrate. The sequence is that of Octanoyltransferase from Salinispora tropica (strain ATCC BAA-916 / DSM 44818 / JCM 13857 / NBRC 105044 / CNB-440).